Reading from the N-terminus, the 127-residue chain is Phosphoribosyl-AMP cyclohydrolase (127 aa).

Aspartate 78 serves as a coordination point for Mg(2+). Cysteine 79 contacts Zn(2+). Positions 80 and 82 each coordinate Mg(2+). Residues cysteine 95 and cysteine 102 each coordinate Zn(2+).

It belongs to the PRA-CH family. In terms of assembly, homodimer. It depends on Mg(2+) as a cofactor. The cofactor is Zn(2+).

Its subcellular location is the cytoplasm. It catalyses the reaction 1-(5-phospho-beta-D-ribosyl)-5'-AMP + H2O = 1-(5-phospho-beta-D-ribosyl)-5-[(5-phospho-beta-D-ribosylamino)methylideneamino]imidazole-4-carboxamide. The protein operates within amino-acid biosynthesis; L-histidine biosynthesis; L-histidine from 5-phospho-alpha-D-ribose 1-diphosphate: step 3/9. Catalyzes the hydrolysis of the adenine ring of phosphoribosyl-AMP. In Salinibacter ruber (strain DSM 13855 / M31), this protein is Phosphoribosyl-AMP cyclohydrolase.